Reading from the N-terminus, the 308-residue chain is Olfactory receptor 2T7 (308 aa).

The Extracellular portion of the chain corresponds to 1 to 17 (MPTLSFWVCSATPVSPG). A helical transmembrane segment spans residues 18 to 40 (FFALILLVFVTSIASNVVKIILI). At 41–51 (HIDSRLHTPMY) the chain is on the cytoplasmic side. A helical membrane pass occupies residues 52–74 (FLLSQLSLRDILYISTIVPKMLV). Residues 75–88 (DQVMSQRAISFAGC) lie on the Extracellular side of the membrane. Cys-88 and Cys-170 are oxidised to a cystine. The chain crosses the membrane as a helical span at residues 89-109 (TAQHFLYLTLAGAEFFLLGLM). Over 110 to 130 (SCDRYVAICNPLHYPDLMSRK) the chain is Cytoplasmic. Residues 131 to 151 (ICWLIVAAAWLGGSIDGFLLT) traverse the membrane as a helical segment. At 152–188 (PVTMQFPFCASREINHFFCEVPALLKLSCTDTSAYET) the chain is on the extracellular side. Residues 189-209 (AMYVCCIMMLLIPFSVISGSY) traverse the membrane as a helical segment. At 210 to 235 (TRILITVYRMSEAEGRRKAVATCSSH) the chain is on the cytoplasmic side. A helical membrane pass occupies residues 236-256 (MVVVSLFYGAAMYTYVLPHSY). The Extracellular portion of the chain corresponds to 257-262 (HTPEQD). Residues 263–283 (KAVSAFYTILTPMLNPLIYSL) form a helical membrane-spanning segment. The Cytoplasmic segment spans residues 284-308 (RNKDVTGALQKVVGRCVSSGKVTTF).

This sequence belongs to the G-protein coupled receptor 1 family.

The protein localises to the cell membrane. Its function is as follows. Odorant receptor. The protein is Olfactory receptor 2T7 (OR2T7) of Homo sapiens (Human).